Reading from the N-terminus, the 143-residue chain is Large ribosomal subunit protein uL15 (143 aa).

Positions 1-56 (MQLNSIKPAAGAKHAKRRVGRGIGSGLGKTAGRGHKGQKSRAGGYHKVGFEGGQMP) are disordered. Over residues 21–31 (RGIGSGLGKTA) the composition is skewed to gly residues.

The protein belongs to the universal ribosomal protein uL15 family. In terms of assembly, part of the 50S ribosomal subunit.

Its function is as follows. Binds to the 23S rRNA. This chain is Large ribosomal subunit protein uL15, found in Verminephrobacter eiseniae (strain EF01-2).